The primary structure comprises 124 residues: Large ribosomal subunit protein bL12 (124 aa).

Belongs to the bacterial ribosomal protein bL12 family. As to quaternary structure, homodimer. Part of the ribosomal stalk of the 50S ribosomal subunit. Forms a multimeric L10(L12)X complex, where L10 forms an elongated spine to which 2 to 4 L12 dimers bind in a sequential fashion. Binds GTP-bound translation factors.

Functionally, forms part of the ribosomal stalk which helps the ribosome interact with GTP-bound translation factors. Is thus essential for accurate translation. The sequence is that of Large ribosomal subunit protein bL12 from Sulfurovum sp. (strain NBC37-1).